The following is a 256-amino-acid chain: Eukaryotic translation initiation factor 3 subunit J (256 aa).

The segment at 1-67 is sufficient for interaction with EIF3B; that stretch reads MAAAAAGDSD…KEEAEVKPEV (67 aa). The segment at 1 to 106 is disordered; it reads MAAAAAGDSD…LEEPEEPKVL (106 aa). Serine 9, serine 11, and serine 18 each carry phosphoserine. The span at 38–57 shows a compositional bias: acidic residues; that stretch reads EGEDEDEDVKDNWDDDDDEK. Residues 58 to 104 are compositionally biased toward basic and acidic residues; it reads KEEAEVKPEVKISEKKKIAEKIKEKERQQKKRQEEIKKRLEEPEEPK. A coiled-coil region spans residues 68-133; it reads KISEKKKIAE…ESDLELAKET (66 aa). Lysine 104 participates in a covalent cross-link: Glycyl lysine isopeptide (Lys-Gly) (interchain with G-Cter in SUMO2). Threonine 107 carries the post-translational modification Phosphothreonine. Phosphoserine is present on serine 125. Positions 214–243 are disordered; the sequence is QSKAKKKKKGVVPGGGLKATMKDDLADYGG. Positions 241 to 256 are promotes stable association with the 40S ribosome; that stretch reads YGGYDGGYAQDYEDFM. At tyrosine 252 the chain carries Phosphotyrosine.

The protein belongs to the eIF-3 subunit J family. Component of the eukaryotic translation initiation factor 3 (eIF-3) complex, which is composed of 13 subunits: EIF3A, EIF3B, EIF3C, EIF3D, EIF3E, EIF3F, EIF3G, EIF3H, EIF3I, EIF3J, EIF3K, EIF3L and EIF3M. The eIF-3 complex appears to include 3 stable modules: module A is composed of EIF3A, EIF3B, EIF3G and EIF3I; module B is composed of EIF3F, EIF3H, and EIF3M; and module C is composed of EIF3C, EIF3D, EIF3E, EIF3K and EIF3L. EIF3C of module C binds EIF3B of module A and EIF3H of module B, thereby linking the three modules. EIF3J is a labile subunit that binds to the eIF-3 complex via EIF3B. The eIF-3 complex interacts with RPS6KB1 under conditions of nutrient depletion. Mitogenic stimulation leads to binding and activation of a complex composed of MTOR and RPTOR, leading to phosphorylation and release of RPS6KB1 and binding of EIF4B to eIF-3. Phosphorylated. Phosphorylation is enhanced upon serum stimulation.

It is found in the cytoplasm. Its function is as follows. Component of the eukaryotic translation initiation factor 3 (eIF-3) complex, which is required for several steps in the initiation of protein synthesis. The eIF-3 complex associates with the 40S ribosome and facilitates the recruitment of eIF-1, eIF-1A, eIF-2:GTP:methionyl-tRNAi and eIF-5 to form the 43S pre-initiation complex (43S PIC). The eIF-3 complex stimulates mRNA recruitment to the 43S PIC and scanning of the mRNA for AUG recognition. The eIF-3 complex is also required for disassembly and recycling of post-termination ribosomal complexes and subsequently prevents premature joining of the 40S and 60S ribosomal subunits prior to initiation. The eIF-3 complex specifically targets and initiates translation of a subset of mRNAs involved in cell proliferation, including cell cycling, differentiation and apoptosis, and uses different modes of RNA stem-loop binding to exert either translational activation or repression. This subunit binds directly within the mRNA entry channel of the 40S ribosome to the aminoacyl (A) site. It may regulate the interaction between the 43S PIC and mRNA. This Bos taurus (Bovine) protein is Eukaryotic translation initiation factor 3 subunit J.